The chain runs to 325 residues: Bifunctional ligase/repressor BirA (325 aa).

Positions 23 to 42 (GQKISDALGCSRTAVWKHIE) form a DNA-binding region, H-T-H motif. The region spanning 74–262 (RFGLKTEVMG…CFEKRYRDYM (189 aa)) is the BPL/LPL catalytic domain. Biotin contacts are provided by residues Q118, 122–124 (RGR), and K189.

The protein belongs to the biotin--protein ligase family.

It catalyses the reaction biotin + L-lysyl-[protein] + ATP = N(6)-biotinyl-L-lysyl-[protein] + AMP + diphosphate + H(+). Its function is as follows. Acts both as a biotin--[acetyl-CoA-carboxylase] ligase and a repressor. The chain is Bifunctional ligase/repressor BirA from Bacillus subtilis (strain 168).